We begin with the raw amino-acid sequence, 265 residues long: tRNA pseudouridine synthase A (265 aa).

The active-site Nucleophile is the Asp-53. Tyr-111 is a binding site for substrate.

It belongs to the tRNA pseudouridine synthase TruA family. In terms of assembly, homodimer.

It carries out the reaction uridine(38/39/40) in tRNA = pseudouridine(38/39/40) in tRNA. Its function is as follows. Formation of pseudouridine at positions 38, 39 and 40 in the anticodon stem and loop of transfer RNAs. The protein is tRNA pseudouridine synthase A of Acinetobacter baumannii (strain ATCC 17978 / DSM 105126 / CIP 53.77 / LMG 1025 / NCDC KC755 / 5377).